The chain runs to 359 residues: Phospho-N-acetylmuramoyl-pentapeptide-transferase (359 aa).

The next 10 helical transmembrane spans lie at 3-23, 53-73, 84-104, 117-137, 156-176, 187-207, 231-251, 255-275, 283-303, and 330-350; these read QILF…PVLI, GGVA…LIGI, GLLV…DDFI, TAKL…ALQF, IATV…LVSA, LDGL…IITF, LALI…WNAA, IFMG…LSIT, VVIG…VAVF, and VIIR…ALFY.

The protein belongs to the glycosyltransferase 4 family. MraY subfamily. It depends on Mg(2+) as a cofactor.

The protein resides in the cell membrane. It carries out the reaction UDP-N-acetyl-alpha-D-muramoyl-L-alanyl-gamma-D-glutamyl-meso-2,6-diaminopimeloyl-D-alanyl-D-alanine + di-trans,octa-cis-undecaprenyl phosphate = di-trans,octa-cis-undecaprenyl diphospho-N-acetyl-alpha-D-muramoyl-L-alanyl-D-glutamyl-meso-2,6-diaminopimeloyl-D-alanyl-D-alanine + UMP. It functions in the pathway cell wall biogenesis; peptidoglycan biosynthesis. Its function is as follows. Catalyzes the initial step of the lipid cycle reactions in the biosynthesis of the cell wall peptidoglycan: transfers peptidoglycan precursor phospho-MurNAc-pentapeptide from UDP-MurNAc-pentapeptide onto the lipid carrier undecaprenyl phosphate, yielding undecaprenyl-pyrophosphoryl-MurNAc-pentapeptide, known as lipid I. This Rhodococcus opacus (strain B4) protein is Phospho-N-acetylmuramoyl-pentapeptide-transferase.